The chain runs to 230 residues: V-type proton ATPase subunit E (230 aa).

Belongs to the V-ATPase E subunit family. V-ATPase is a heteromultimeric enzyme composed of a peripheral catalytic V1 complex (components A to H) attached to an integral membrane V0 proton pore complex (components: a, c, c', c'', d, e, f and VOA1).

Its subcellular location is the vacuole membrane. Its function is as follows. Subunit of the V1 complex of vacuolar(H+)-ATPase (V-ATPase), a multisubunit enzyme composed of a peripheral complex (V1) that hydrolyzes ATP and a membrane integral complex (V0) that translocates protons. V-ATPase is responsible for acidifying and maintaining the pH of intracellular compartments. In Neurospora crassa (strain ATCC 24698 / 74-OR23-1A / CBS 708.71 / DSM 1257 / FGSC 987), this protein is V-type proton ATPase subunit E.